An 885-amino-acid polypeptide reads, in one-letter code: Chitin synthase 3 (885 aa).

The disordered stretch occupies residues 1 to 59 (MASQYPGHQLDDIPSTNVYRPPPRHEDDEAEHALLHQNSAYQSQYDDPHSRPLTPGQES). Basic and acidic residues predominate over residues 23–34 (PRHEDDEAEHAL). Polar residues predominate over residues 36–45 (HQNSAYQSQY). 6 consecutive transmembrane segments (helical) span residues 565-585 (FFLH…WFSL), 620-640 (IINT…FILA), 650-670 (VAYI…IVLS), 707-727 (IVII…FLYM), 735-755 (SFAQ…IYAF), and 837-857 (LVAT…SDSL).

Belongs to the chitin synthase family. Class III subfamily.

Its subcellular location is the cell membrane. The catalysed reaction is [(1-&gt;4)-N-acetyl-beta-D-glucosaminyl](n) + UDP-N-acetyl-alpha-D-glucosamine = [(1-&gt;4)-N-acetyl-beta-D-glucosaminyl](n+1) + UDP + H(+). Polymerizes chitin, a structural polymer of the cell wall and septum, by transferring the sugar moiety of UDP-GlcNAc to the non-reducing end of the growing chitin polymer. Is not only stable at different pH, but is also able to tolerate a broad temperature range. With CHS2, plays an important role in virulence. This chain is Chitin synthase 3, found in Exophiala dermatitidis (Black yeast-like fungus).